We begin with the raw amino-acid sequence, 52 residues long: Large ribosomal subunit protein eL39 (52 aa).

The protein belongs to the eukaryotic ribosomal protein eL39 family.

In Caldivirga maquilingensis (strain ATCC 700844 / DSM 13496 / JCM 10307 / IC-167), this protein is Large ribosomal subunit protein eL39.